The chain runs to 237 residues: UDP-Gal:alpha-D-GlcNAc-diphosphoundecaprenol beta-1,4-galactosyltransferase (237 aa).

The active-site Nucleophile is the E101.

This sequence belongs to the glycosyltransferase 26 family. Mn(2+) serves as cofactor. The cofactor is Ni(2+). Requires Pb(2+) as cofactor.

The catalysed reaction is N-acetyl-alpha-D-glucosaminyl-di-trans,octa-cis-undecaprenyl diphosphate + UDP-alpha-D-galactose = beta-D-Gal-(1-&gt;4)-alpha-D-GlcNAc-di-trans,octa-cis-undecaprenyl diphosphate + UDP + H(+). It participates in bacterial outer membrane biogenesis; LPS O-antigen biosynthesis. Functionally, galactosyltransferase that adds one galactose residue in the beta-1-4 linkage to GlcNAc-alpha-pyrophosphate-lipid in the biosynthesis of the O-polysaccharide repeating unit of the O antigen. This chain is UDP-Gal:alpha-D-GlcNAc-diphosphoundecaprenol beta-1,4-galactosyltransferase (wfeD), found in Shigella boydii.